The primary structure comprises 162 residues: NADH-quinone oxidoreductase subunit I (162 aa).

2 consecutive 4Fe-4S ferredoxin-type domains span residues 53 to 83 (LRRY…IESD) and 93 to 122 (TRYD…ETHI). Cys63, Cys66, Cys69, Cys73, Cys102, Cys105, Cys108, and Cys112 together coordinate [4Fe-4S] cluster.

The protein belongs to the complex I 23 kDa subunit family. As to quaternary structure, NDH-1 is composed of 14 different subunits. Subunits NuoA, H, J, K, L, M, N constitute the membrane sector of the complex. Requires [4Fe-4S] cluster as cofactor.

It is found in the cell inner membrane. The catalysed reaction is a quinone + NADH + 5 H(+)(in) = a quinol + NAD(+) + 4 H(+)(out). NDH-1 shuttles electrons from NADH, via FMN and iron-sulfur (Fe-S) centers, to quinones in the respiratory chain. The immediate electron acceptor for the enzyme in this species is believed to be ubiquinone. Couples the redox reaction to proton translocation (for every two electrons transferred, four hydrogen ions are translocated across the cytoplasmic membrane), and thus conserves the redox energy in a proton gradient. This chain is NADH-quinone oxidoreductase subunit I, found in Bordetella avium (strain 197N).